The primary structure comprises 230 residues: Ribonuclease 3 (230 aa).

Residues 6–135 (TTELKERYGI…FLGALYLDQK (130 aa)) form the RNase III domain. Mg(2+) is bound at residue glutamate 48. Aspartate 52 is an active-site residue. Aspartate 121 and glutamate 124 together coordinate Mg(2+). Residue glutamate 124 is part of the active site. A DRBM domain is found at 161–230 (DHKTQLQEVL…AERALKSIPQ (70 aa)).

This sequence belongs to the ribonuclease III family. As to quaternary structure, homodimer. It depends on Mg(2+) as a cofactor.

The protein localises to the cytoplasm. The catalysed reaction is Endonucleolytic cleavage to 5'-phosphomonoester.. In terms of biological role, digests double-stranded RNA. Involved in the processing of primary rRNA transcript to yield the immediate precursors to the large and small rRNAs (23S and 16S). Processes some mRNAs, and tRNAs when they are encoded in the rRNA operon. Processes pre-crRNA and tracrRNA of type II CRISPR loci if present in the organism. This chain is Ribonuclease 3, found in Enterococcus faecalis (strain ATCC 700802 / V583).